The sequence spans 1500 residues: Copper-transporting ATPase 1 (1500 aa).

At 1-653 (MDPSMGVNSV…KREIRQWRRS (653 aa)) the chain is on the cytoplasmic side. HMA domains follow at residues 8–74 (NSVT…FDAV) and 85–151 (TDTL…LDTG). Residues T18, C19, and C22 each coordinate Cu(+). Residue T152 is modified to Phosphothreonine. Residues 171–237 (VVLKMKVEGM…QIEAMGFPAF (67 aa)) form the HMA 3 domain. Cu(+) is bound by residues C182 and C185. Residue S270 is modified to Phosphoserine. In terms of domain architecture, HMA 4 spans 277 to 343 (STATFIIDGM…AIEAVSPGLY (67 aa)). Cu(+) contacts are provided by C288 and C291. A Phosphothreonine modification is found at T327. Phosphoserine is present on residues S339, S353, S357, and S362. 3 HMA domains span residues 377–443 (QETV…FDAT), 488–554 (SKCY…FGAT), and 564–630 (GVLE…FEAS). The Cu(+) site is built by C388, C391, C499, C502, C575, and C578. Residues 654–675 (FLVSLFFCIPVMGLMIYMMVMD) form a helical membrane-spanning segment. At 676 to 714 (HHFATLHHNQNMSKEEMINLHSSMFLERQILPGLSVMNL) the chain is on the extracellular side. N686 is a glycosylation site (N-linked (GlcNAc...) asparagine). A helical transmembrane segment spans residues 715-734 (LSFLLCVPVQFFGGWYFYIQ). Residues 735 to 741 (AYKALKH) lie on the Cytoplasmic side of the membrane. The helical transmembrane segment at 742 to 762 (KTANMDVLIVLATTIAFAYSL) threads the bilayer. At 763–781 (IILLVAMYERAKVNPITFF) the chain is on the extracellular side. A helical transmembrane segment spans residues 782-802 (DTPPMLFVFIALGRWLEHIAK). Over 803–936 (GKTSEALAKL…KAPIQQFADK (134 aa)) the chain is Cytoplasmic. The helical transmembrane segment at 937–959 (LSGYFVPFIVFVSIATLLVWIVI) threads the bilayer. Residues 960–989 (GFLNFEIVETYFPGYNRSISRTETIIRFAF) are Extracellular-facing. Residue N975 is glycosylated (N-linked (GlcNAc...) asparagine). The helical transmembrane segment at 990–1011 (QASITVLCIACPCSLGLATPTA) threads the bilayer. Residues 1012–1356 (VMVGTGVGAQ…LSRKTVKRIR (345 aa)) lie on the Cytoplasmic side of the membrane. Residue D1044 is the 4-aspartylphosphate intermediate of the active site. E1081 contacts ATP. A Phosphothreonine modification is found at T1212. The Mg(2+) site is built by D1301 and D1305. A helical transmembrane segment spans residues 1357–1374 (INFVFALIYNLVGIPIAA). Over 1375–1385 (GVFMPIGLVLQ) the chain is Extracellular. A helical transmembrane segment spans residues 1386–1405 (PWMGSAAMAASSVSVVLSSL). The Cytoplasmic segment spans residues 1406 to 1500 (FLKLYRKPTY…DFREDDDTAL (95 aa)). 5 positions are modified to phosphoserine: S1430, S1432, S1460, S1463, and S1466. The short motif at 1467–1468 (LL) is the Endocytosis signal element. Phosphoserine occurs at positions 1469, 1473, 1476, and 1486. The segment at 1486-1500 (SLLVGDFREDDDTAL) is PDZD11-binding. The short motif at 1487–1488 (LL) is the Endocytosis signal element.

This sequence belongs to the cation transport ATPase (P-type) (TC 3.A.3) family. Type IB subfamily. As to quaternary structure, monomer. Interacts with PDZD11. Interacts with ATOX1 and COMMD1. Interacts with TYRP1. Directly interacts with SOD3; this interaction is copper-dependent and is required for SOD3 activity. Widely expressed including in heart, brain, lung, muscle, kidney, pancreas, and to a lesser extent placenta. Expressed in fibroblasts, aortic smooth muscle cells, aortic endothelial cells and umbilical vein endothelial cells (at protein level). As to expression, expressed in cerebellum and brain cortex.

The protein resides in the golgi apparatus. The protein localises to the trans-Golgi network membrane. It localises to the cell membrane. Its subcellular location is the melanosome membrane. It is found in the early endosome membrane. The protein resides in the cell projection. The protein localises to the axon. It localises to the dendrite. Its subcellular location is the postsynaptic density. It is found in the cytoplasm. The protein resides in the cytosol. The protein localises to the endoplasmic reticulum. The enzyme catalyses Cu(+)(in) + ATP + H2O = Cu(+)(out) + ADP + phosphate + H(+). Its function is as follows. ATP-driven copper (Cu(+)) ion pump that plays an important role in intracellular copper ion homeostasis. Within a catalytic cycle, acquires Cu(+) ion from donor protein on the cytoplasmic side of the membrane and delivers it to acceptor protein on the lumenal side. The transfer of Cu(+) ion across the membrane is coupled to ATP hydrolysis and is associated with a transient phosphorylation that shifts the pump conformation from inward-facing to outward-facing state. Under physiological conditions, at low cytosolic copper concentration, it is localized at the trans-Golgi network (TGN) where it transfers Cu(+) ions to cuproenzymes of the secretory pathway. Upon elevated cytosolic copper concentrations, it relocalizes to the plasma membrane where it is responsible for the export of excess Cu(+) ions. May play a dual role in neuron function and survival by regulating cooper efflux and neuronal transmission at the synapse as well as by supplying Cu(+) ions to enzymes such as PAM, TYR and SOD3. In the melanosomes of pigmented cells, provides copper cofactor to TYR to form an active TYR holoenzyme for melanin biosynthesis. The chain is Copper-transporting ATPase 1 from Homo sapiens (Human).